The chain runs to 68 residues: Large ribosomal subunit protein uL29c (68 aa).

It belongs to the universal ribosomal protein uL29 family.

It is found in the plastid. Its subcellular location is the chloroplast. The sequence is that of Large ribosomal subunit protein uL29c from Pyropia yezoensis (Susabi-nori).